The chain runs to 553 residues: MSSTTAIRLAARPSSWRGTGALSSGRPLSQFASLPRRSINPSISGMRQGTLRLSIHDGRLFFSTQPPKDTPENMNNKETGSSNVIFMPPPPPAQTEAPSSGSAKEDTTDATNKSETETPTAASESETSKSSESDVSSASTSDSANSSETTTTTSETTPENGNNDTAQPELPSRTEAHRARLSARFSTIMDNFQTRLLTATQTLNDLTGYSAIEQIKRKNAELEVAHGQAQSRLRDARHNYKSLTMHRASTQREVTTLLARKDTWNPLDLERFTSLYRLDHELEAQVAQAAQELTEAETEESRLSADLNAGILKRYHEEQIWSDRIRRQSTWGTWGLMGVNVLLFLVLQFVAEPWRRKRLMKGIAENEKGVIDEVRHELGQVRQALEASGLRETAHLARLMEQEREIQALASTSSSSGDPQGGGGRTEGEVEMDIGAEFMAAAAEEAAEEAATAQQQQQQQQQQQQQQHHQTPETQEEPQQPPLTWKQTAQKWQQTLSDPQQIKAAVVDLYSDRRIDLKMRDVSLLALESAATGAAVVASVAFFVLRSSGSGKA.

The tract at residues 61 to 174 is disordered; the sequence is FFSTQPPKDT…TAQPELPSRT (114 aa). Over residues 62–84 the composition is skewed to polar residues; that stretch reads FSTQPPKDTPENMNNKETGSSNV. Basic and acidic residues predominate over residues 103 to 116; that stretch reads AKEDTTDATNKSET. Residues 133–160 are compositionally biased toward low complexity; sequence SDVSSASTSDSANSSETTTTTSETTPEN. Coiled coils occupy residues 210–241 and 277–309; these read SAIEQIKRKNAELEVAHGQAQSRLRDARHNYK and RLDHELEAQVAQAAQELTEAETEESRLSADLNA. Residues 331 to 351 traverse the membrane as a helical segment; the sequence is WGTWGLMGVNVLLFLVLQFVA. The Mitochondrial intermembrane portion of the chain corresponds to 352–523; that stretch reads EPWRRKRLMK…RIDLKMRDVS (172 aa). Disordered stretches follow at residues 408–428 and 443–497; these read ALASTSSSSGDPQGGGGRTEG and AEEA…QTLS. Composition is skewed to low complexity over residues 443 to 473 and 484 to 495; these read AEEAAEEAATAQQQQQQQQQQQQQQHHQTPE and TWKQTAQKWQQT. Residues 524–544 traverse the membrane as a helical segment; the sequence is LLALESAATGAAVVASVAFFV. Topologically, residues 545–553 are mitochondrial matrix; that stretch reads LRSSGSGKA.

Belongs to the SHE9 family. In terms of assembly, homooligomer.

It localises to the mitochondrion inner membrane. Required for the maintenance of the structure of the mitochondrial inner membrane. Involved in mitochondrial morphology. Causes growth arrest when highly overexpressed. This chain is Sensitive to high expression protein 9 homolog, mitochondrial (she-9), found in Neurospora crassa (strain ATCC 24698 / 74-OR23-1A / CBS 708.71 / DSM 1257 / FGSC 987).